The chain runs to 338 residues: Protein FosB (338 aa).

2 disordered regions span residues 1-54 (MFQA…PGSF) and 80-179 (AQSQ…RREL). Polar residues-rich tracts occupy residues 13–31 (SRCSSSPSAESQYLSSVDS) and 102–112 (TSYSTPGLSAY). Ser27 is subject to Phosphoserine. The segment covering 123 to 137 (PSTSTTTSGPVSARP) has biased composition (low complexity). Positions 155 to 218 (EEKRRVRRER…ERLEFVLVAH (64 aa)) constitute a bZIP domain. The segment at 157-182 (KRRVRRERNKLAAAKCRNRRRELTDR) is basic motif. Residues 183–211 (LQAETDQLEEEKAELESEIAELQKEKERL) are leucine-zipper. Disordered stretches follow at residues 222 to 276 (CKIP…PPNL) and 316 to 338 (GAQRTSGSEQPSDPLNSPSLLAL). Residues 256–265 (LPPPPPPPLP) show a composition bias toward pro residues. Polar residues-rich tracts occupy residues 266–276 (FQSSRDAPPNL) and 318–338 (QRTSGSEQPSDPLNSPSLLAL).

Belongs to the bZIP family. Fos subfamily. As to quaternary structure, heterodimer; binds to DNA as heterodimer. Component of an AP-1 transcription factor complex; composed of FOS-JUN heterodimers. As part of the AP-1 transcription factor complex, forms heterodimers with JUN, JUNB or JUND, thereby binding to the AP-1 consensus sequence and stimulating transcription. Interacts with the BAF multiprotein chromatin-remodeling complex subunits SMARCB1 and SMARCD1. Interacts with ARID1A and JUN. In terms of assembly, homodimer under oxidizing conditions and monomer under reducing conditions (in vitro). Heterodimer; binds to DNA as heterodimer. Forms heterodimers with JUNB, JUN or JUND; thereby binding to the AP-1 consensus sequence but does not stimulate transcription. Forms heterodimers with JUND under oxidizing conditions. Phosphorylated. In terms of processing, phosphorylated at Ser-27 by CSNK2A1; phosphorylation increases protein stability and transactivation potential. In terms of tissue distribution, expressed in brain, including the preoptic area of the hypothalamus, the main and accessory olfactory bulbs, the pyriform cortex and the hippocampus (at protein level). Expressed in the neurons of the subgranular zone of the dentate gyrus in the hippocampus (at protein level). Expressed in pyramidal cells in CA1 and CA3, in the dentate gyrus and the nucleus accumbens of the striatum (at protein level). Expressed in the core and shell of the nucleus accumbens of the striatum (at protein level). Expressed in the neurons of the subgranular zone of the dentate gyrus in the hippocampus (at protein level).

Its subcellular location is the nucleus. In terms of biological role, heterodimerizes with proteins of the JUN family to form an AP-1 transcription factor complex, thereby enhancing their DNA binding activity to gene promoters containing an AP-1 consensus sequence 5'-TGA[GC]TCA-3' and enhancing their transcriptional activity. As part of the AP-1 complex, facilitates enhancer selection together with cell-type-specific transcription factors by collaboratively binding to nucleosomal enhancers and recruiting the SWI/SNF (BAF) chromatin remodeling complex to establish accessible chromatin. Together with JUN, plays a role in activation-induced cell death of T cells by binding to the AP-1 promoter site of FASLG/CD95L, and inducing its transcription in response to activation of the TCR/CD3 signaling pathway. Exhibits transactivation activity in vitro. Involved in the display of nurturing behavior towards newborns. May play a role in neurogenesis in the hippocampus and in learning and memory-related tasks by regulating the expression of various genes involved in neurogenesis, depression and epilepsy. Implicated in behavioral responses related to morphine reward and spatial memory. Its function is as follows. Exhibits lower transactivation activity than isoform 1 in vitro. The heterodimer with JUN does not display any transcriptional activity, and may thereby act as an transcriptional inhibitor. May be involved in the regulation of neurogenesis in the hippocampus. May play a role in synaptic modifications in nucleus accumbens medium spiny neurons and thereby play a role in adaptive and pathological reward-dependent learning, including maladaptive responses involved in drug addiction. Seems to be more stably expressed with a half-life of ~9.5 hours in cell culture as compared to 1.5 hours half-life of isoform 1. This is Protein FosB from Mus musculus (Mouse).